A 179-amino-acid chain; its full sequence is Disulfide bond formation protein B (179 aa).

At 1-14 the chain is on the cytoplasmic side; that stretch reads MLSYFKELSLRRPA. The helical transmembrane segment at 15–31 threads the bilayer; it reads WLLLATLACTLEVTGLY. Over 32–49 the chain is Periplasmic; that stretch reads FQHKLGLIPCVMCIYERV. Cysteine 41 and cysteine 44 form a disulfide bridge. A helical membrane pass occupies residues 50–65; sequence ALTGLLIAGLIALIAP. At 66-72 the chain is on the cytoplasmic side; that stretch reads NFFLFRW. The chain crosses the membrane as a helical span at residues 73 to 90; it reads LALVLWGFSAFKGLSLSI. Over 91 to 146 the chain is Periplasmic; the sequence is KHYDYQANPSPWNQCEFKPQFPQTIPLDEWFPNIFAAGTVNCSEKQWQMLGWGMPE. Residues cysteine 105 and cysteine 132 are joined by a disulfide bond. A helical membrane pass occupies residues 147–165; it reads WLIVAFSLFMLFFLIVFMS. Residues 166–179 lie on the Cytoplasmic side of the membrane; it reads QFKRAKPQYRSVFR.

This sequence belongs to the DsbB family.

The protein localises to the cell inner membrane. Functionally, required for disulfide bond formation in some periplasmic proteins. Acts by oxidizing the DsbA protein. The protein is Disulfide bond formation protein B of Haemophilus ducreyi (strain 35000HP / ATCC 700724).